Reading from the N-terminus, the 448-residue chain is N-succinylarginine dihydrolase (448 aa).

Residues 19–28, Asn110, and 137–138 contribute to the substrate site; these read GGLSYGNVAS and HR. The active site involves Glu174. Substrate is bound at residue Arg214. His250 is a catalytic residue. The substrate site is built by Asp252 and Asn365. Cys371 acts as the Nucleophile in catalysis.

This sequence belongs to the succinylarginine dihydrolase family. Homodimer.

It catalyses the reaction N(2)-succinyl-L-arginine + 2 H2O + 2 H(+) = N(2)-succinyl-L-ornithine + 2 NH4(+) + CO2. It participates in amino-acid degradation; L-arginine degradation via AST pathway; L-glutamate and succinate from L-arginine: step 2/5. Catalyzes the hydrolysis of N(2)-succinylarginine into N(2)-succinylornithine, ammonia and CO(2). The sequence is that of N-succinylarginine dihydrolase from Ectopseudomonas mendocina (strain ymp) (Pseudomonas mendocina).